The sequence spans 629 residues: tRNA uridine 5-carboxymethylaminomethyl modification enzyme MnmG (629 aa).

Residues 13–18 (GGGHAG), Val125, and Ser180 each bind FAD. 273-287 (GPRYCPSIEDKVMRF) serves as a coordination point for NAD(+). Gln370 contacts FAD.

The protein belongs to the MnmG family. In terms of assembly, homodimer. Heterotetramer of two MnmE and two MnmG subunits. It depends on FAD as a cofactor.

Its subcellular location is the cytoplasm. Its function is as follows. NAD-binding protein involved in the addition of a carboxymethylaminomethyl (cmnm) group at the wobble position (U34) of certain tRNAs, forming tRNA-cmnm(5)s(2)U34. This Cronobacter sakazakii (strain ATCC BAA-894) (Enterobacter sakazakii) protein is tRNA uridine 5-carboxymethylaminomethyl modification enzyme MnmG.